A 219-amino-acid chain; its full sequence is ATP synthase subunit a (219 aa).

Helical transmembrane passes span 16-36, 57-79, 96-116, 122-142, 158-178, and 184-204; these read LSNW…FWLI, LLMG…FILF, LAVT…YTWI, ALAH…MVLM, LAAN…QGTL, and TSIV…VAII.

It belongs to the ATPase A chain family. F-type ATPases have 2 components, CF(1) - the catalytic core - and CF(0) - the membrane proton channel. CF(1) has five subunits: alpha(3), beta(3), gamma(1), delta(1), epsilon(1). CF(0) has three main subunits: a, b and c.

The protein resides in the mitochondrion inner membrane. In terms of biological role, mitochondrial membrane ATP synthase (F(1)F(0) ATP synthase or Complex V) produces ATP from ADP in the presence of a proton gradient across the membrane which is generated by electron transport complexes of the respiratory chain. F-type ATPases consist of two structural domains, F(1) - containing the extramembraneous catalytic core and F(0) - containing the membrane proton channel, linked together by a central stalk and a peripheral stalk. During catalysis, ATP synthesis in the catalytic domain of F(1) is coupled via a rotary mechanism of the central stalk subunits to proton translocation. Key component of the proton channel; it may play a direct role in the translocation of protons across the membrane. The chain is ATP synthase subunit a (ATP6) from Artemia franciscana (Brine shrimp).